We begin with the raw amino-acid sequence, 292 residues long: MPSLKDLKNRIGSVKSTQKITKAMQLVAAAKLKRAQEAATAARPYAERLAAVLANLAATTGQGGPKLLTGNGTDQTHLLVVMTAERGLAGGFNAYVAKLARLKIQQLQSEGKTVKVLTIGKKGREVLAREHSALFTGHVNLSDVKSNNFTDASLSVGQMLTKGFENGEFDVATLIYSQFKNVLSQVPTAQQLIPATAPEGAPVIDLGGAQYIYEPSEEALLEALLPRYINTQILSAMLESSAGEQASRMTAMDNATRNAKDLIKALNLKYNRARQAQITKELIEIISGAEAL.

It belongs to the ATPase gamma chain family. In terms of assembly, F-type ATPases have 2 components, CF(1) - the catalytic core - and CF(0) - the membrane proton channel. CF(1) has five subunits: alpha(3), beta(3), gamma(1), delta(1), epsilon(1). CF(0) has three main subunits: a, b and c.

The protein resides in the cell inner membrane. Functionally, produces ATP from ADP in the presence of a proton gradient across the membrane. The gamma chain is believed to be important in regulating ATPase activity and the flow of protons through the CF(0) complex. This is ATP synthase gamma chain from Hyphomonas neptunium (strain ATCC 15444).